The primary structure comprises 301 residues: Methionyl-tRNA formyltransferase (301 aa).

109 to 112 (SLLP) contributes to the (6S)-5,6,7,8-tetrahydrofolate binding site.

Belongs to the Fmt family.

It catalyses the reaction L-methionyl-tRNA(fMet) + (6R)-10-formyltetrahydrofolate = N-formyl-L-methionyl-tRNA(fMet) + (6S)-5,6,7,8-tetrahydrofolate + H(+). Its function is as follows. Attaches a formyl group to the free amino group of methionyl-tRNA(fMet). The formyl group appears to play a dual role in the initiator identity of N-formylmethionyl-tRNA by promoting its recognition by IF2 and preventing the misappropriation of this tRNA by the elongation apparatus. This Novosphingobium aromaticivorans (strain ATCC 700278 / DSM 12444 / CCUG 56034 / CIP 105152 / NBRC 16084 / F199) protein is Methionyl-tRNA formyltransferase.